We begin with the raw amino-acid sequence, 441 residues long: Serine--tRNA ligase (441 aa).

250–252 (TSE) contacts L-serine. Residues 281 to 283 (RRE) and Val-297 contribute to the ATP site. Glu-304 is an L-serine binding site. An ATP-binding site is contributed by 368–371 (EIVS). An L-serine-binding site is contributed by Thr-402.

Belongs to the class-II aminoacyl-tRNA synthetase family. Type-1 seryl-tRNA synthetase subfamily. Homodimer. The tRNA molecule binds across the dimer.

It is found in the cytoplasm. It catalyses the reaction tRNA(Ser) + L-serine + ATP = L-seryl-tRNA(Ser) + AMP + diphosphate + H(+). It carries out the reaction tRNA(Sec) + L-serine + ATP = L-seryl-tRNA(Sec) + AMP + diphosphate + H(+). The protein operates within aminoacyl-tRNA biosynthesis; selenocysteinyl-tRNA(Sec) biosynthesis; L-seryl-tRNA(Sec) from L-serine and tRNA(Sec): step 1/1. In terms of biological role, catalyzes the attachment of serine to tRNA(Ser). Is also able to aminoacylate tRNA(Sec) with serine, to form the misacylated tRNA L-seryl-tRNA(Sec), which will be further converted into selenocysteinyl-tRNA(Sec). The chain is Serine--tRNA ligase from Thermoplasma acidophilum (strain ATCC 25905 / DSM 1728 / JCM 9062 / NBRC 15155 / AMRC-C165).